Reading from the N-terminus, the 161-residue chain is Ragulator complex protein LAMTOR1 (161 aa).

A disordered region spans residues 1–43 (MGCCYSSENEDSDQDREERKLLLDPSSTPTKALNGAEPNYHSL). G2 carries the N-myristoyl glycine lipid modification. Residues C3 and C4 are each lipidated (S-palmitoyl cysteine). K20 is covalently cross-linked (Glycyl lysine isopeptide (Lys-Gly) (interchain with G-Cter in ubiquitin)). A Phosphoserine modification is found at S27. The residue at position 28 (T28) is a Phosphothreonine. A Glycyl lysine isopeptide (Lys-Gly) (interchain with G-Cter in ubiquitin) cross-link involves residue K31. A phosphoserine mark is found at S42 and S56. K60 is covalently cross-linked (Glycyl lysine isopeptide (Lys-Gly) (interchain with G-Cter in ubiquitin)). A Phosphoserine modification is found at S98. Glycyl lysine isopeptide (Lys-Gly) (interchain with G-Cter in ubiquitin) cross-links involve residues K103 and K104. The tract at residues 121–161 (SEPIPFSDLQQVSRIAAYAYSALSQIRVDAKEELVVQFGIP) is interaction with LAMTOR2 and LAMTOR3. S141 is subject to Phosphoserine.

This sequence belongs to the LAMTOR1 family. In terms of assembly, part of the Ragulator complex composed of LAMTOR1, LAMTOR2, LAMTOR3, LAMTOR4 and LAMTOR5. LAMTOR4 and LAMTOR5 form a heterodimer that interacts, through LAMTOR1, with a LAMTOR2, LAMTOR3 heterodimer. Interacts with LAMTOR2 and LAMTOR3; the interaction is direct. The Ragulator complex interacts with both the mTORC1 complex and heterodimers constituted of the Rag GTPases RagA/RRAGA, RagB/RRAGB, RagC/RRAGC and RagD/RRAGD; regulated by amino acid availability. The Ragulator complex interacts with SLC38A9; the probable amino acid sensor. Component of the lysosomal folliculin complex (LFC), composed of FLCN, FNIP1 (or FNIP2), RagA/RRAGA or RagB/RRAGB GDP-bound, RagC/RRAGC or RagD/RRAGD GTP-bound, and Ragulator. Associates with the lysosomal V-ATPase complex; interaction promotes the guanine nucleotide exchange factor (GEF) of the Ragulator complex. Interacts with MMP14. Interacts with CDKN1B; prevents the interaction of CDKN1B with RHOA leaving RHOA in a form accessible to activation by ARHGEF2. Interacts with PIP4P1. In terms of processing, N-terminal myristoylation and palmitoylation mediates its recruitment to lysosome membranes, thereby promoting localization of the Ragulator complex to lysosomes. N-myristoylation by NMT1 is required for palmitoylation at Cys-3 and Cys-4. Post-translationally, ubiquitinated at Lys-60, Lys-103 and Lys-104 by UBE3A in neurons, promoting its degradation by the proteasome, thereby limiting mTORC1 signaling and activity-dependent synaptic remodeling. Ubiquitination at Lys-20 impairs the association with the lysosomal V-ATPase complex. Deubiquitination at Lys-20 by USP32 promotes the association with the lysosomal V-ATPase complex and subsequent activation of the mTORC1 complex.

The protein resides in the lysosome membrane. It is found in the late endosome membrane. Functionally, key component of the Ragulator complex, a multiprotein complex involved in amino acid sensing and activation of mTORC1, a signaling complex promoting cell growth in response to growth factors, energy levels, and amino acids. Activated by amino acids through a mechanism involving the lysosomal V-ATPase, the Ragulator plays a dual role for the small GTPases Rag (RagA/RRAGA, RagB/RRAGB, RagC/RRAGC and/or RagD/RRAGD): it (1) acts as a guanine nucleotide exchange factor (GEF), activating the small GTPases Rag and (2) mediates recruitment of Rag GTPases to the lysosome membrane. Activated Ragulator and Rag GTPases function as a scaffold recruiting mTORC1 to lysosomes where it is in turn activated. LAMTOR1 is directly responsible for anchoring the Ragulator complex to the lysosomal membrane. LAMTOR1 wraps around the other subunits of the Ragulator complex to hold them in place and interacts with the Rag GTPases, thereby playing a key role in the recruitment of the mTORC1 complex to lysosomes. Also involved in the control of embryonic stem cells differentiation via non-canonical RagC/RRAGC and RagD/RRAGD activation: together with FLCN, it is necessary to recruit and activate RagC/RRAGC and RagD/RRAGD at the lysosomes, and to induce exit of embryonic stem cells from pluripotency via non-canonical, mTOR-independent TFE3 inactivation. Also required for late endosomes/lysosomes biogenesis it may regulate both the recycling of receptors through endosomes and the MAPK signaling pathway through recruitment of some of its components to late endosomes. May be involved in cholesterol homeostasis regulating LDL uptake and cholesterol release from late endosomes/lysosomes. May also play a role in RHOA activation. This is Ragulator complex protein LAMTOR1 from Mus musculus (Mouse).